We begin with the raw amino-acid sequence, 92 residues long: PqqA binding protein (92 aa).

Belongs to the PqqD family. As to quaternary structure, monomer. Interacts with PqqE.

It participates in cofactor biosynthesis; pyrroloquinoline quinone biosynthesis. Its function is as follows. Functions as a PqqA binding protein and presents PqqA to PqqE, in the pyrroloquinoline quinone (PQQ) biosynthetic pathway. This Xanthomonas campestris pv. campestris (strain 8004) protein is PqqA binding protein.